The primary structure comprises 546 residues: Type II methyltransferase M.XhoI (546 aa).

The protein belongs to the N(4)/N(6)-methyltransferase family.

The catalysed reaction is a 2'-deoxyadenosine in DNA + S-adenosyl-L-methionine = an N(6)-methyl-2'-deoxyadenosine in DNA + S-adenosyl-L-homocysteine + H(+). In terms of biological role, a gamma subtype methylase, recognizes the double-stranded sequence 5'-CTCGAG-3', methylates A-5 on both strands, and protects the DNA from cleavage by the XhoI endonuclease. In Xanthomonas vasicola, this protein is Type II methyltransferase M.XhoI.